Consider the following 427-residue polypeptide: Serine--tRNA ligase (427 aa).

231–233 lines the L-serine pocket; the sequence is TAE. Residue 262–264 participates in ATP binding; sequence RSE. Glu-285 is a binding site for L-serine. 349 to 352 contributes to the ATP binding site; sequence EISS. Residue Ser-385 coordinates L-serine.

It belongs to the class-II aminoacyl-tRNA synthetase family. Type-1 seryl-tRNA synthetase subfamily. Homodimer. The tRNA molecule binds across the dimer.

The protein localises to the cytoplasm. The catalysed reaction is tRNA(Ser) + L-serine + ATP = L-seryl-tRNA(Ser) + AMP + diphosphate + H(+). The enzyme catalyses tRNA(Sec) + L-serine + ATP = L-seryl-tRNA(Sec) + AMP + diphosphate + H(+). It functions in the pathway aminoacyl-tRNA biosynthesis; selenocysteinyl-tRNA(Sec) biosynthesis; L-seryl-tRNA(Sec) from L-serine and tRNA(Sec): step 1/1. In terms of biological role, catalyzes the attachment of serine to tRNA(Ser). Is also able to aminoacylate tRNA(Sec) with serine, to form the misacylated tRNA L-seryl-tRNA(Sec), which will be further converted into selenocysteinyl-tRNA(Sec). The sequence is that of Serine--tRNA ligase from Listeria welshimeri serovar 6b (strain ATCC 35897 / DSM 20650 / CCUG 15529 / CIP 8149 / NCTC 11857 / SLCC 5334 / V8).